A 225-amino-acid chain; its full sequence is MARVSELAFLLAATLAISLHMQEAGVVKFDIKNQCGYTVWAAGLPGGGKRLDQGQTWTVNLAAGTASARFWGRTGCTFDASGKGSCQTGDCGGQLSCTVSGAVPATLAEYTQSDQDYYDVSLVDGFNIPLAINPTNAQCTAPACKADINAVCPSELKVDGGCNSACNVFKTDQYCCRNAYVDNCPATNYSKIFKNQCPQAYSYAKDDTATFACASGTDYSIVFCP.

Residues 1–26 form the signal peptide; the sequence is MARVSELAFLLAATLAISLHMQEAGV. Intrachain disulfides connect Cys35/Cys224, Cys76/Cys86, Cys91/Cys97, Cys139/Cys213, Cys144/Cys197, Cys152/Cys162, Cys166/Cys175, and Cys176/Cys184. IgE-binding regions lie at residues 146–157, 158–170, and 178–191; these read ADINAVCPSELK, VDGG…NVFK, and NAYV…NYSK.

Belongs to the thaumatin family. In terms of tissue distribution, expressed in pollen (at protein level).

The chain is Pathogenesis-related 5 protein Jun a 3.0101 from Juniperus ashei (Ozark white cedar).